A 296-amino-acid chain; its full sequence is Ribosomal RNA small subunit methyltransferase H (296 aa).

S-adenosyl-L-methionine contacts are provided by residues 38–40 (GVH), E57, F80, D103, and H110.

The protein belongs to the methyltransferase superfamily. RsmH family.

It localises to the cytoplasm. It carries out the reaction cytidine(1402) in 16S rRNA + S-adenosyl-L-methionine = N(4)-methylcytidine(1402) in 16S rRNA + S-adenosyl-L-homocysteine + H(+). Specifically methylates the N4 position of cytidine in position 1402 (C1402) of 16S rRNA. This Borreliella burgdorferi (strain ATCC 35210 / DSM 4680 / CIP 102532 / B31) (Borrelia burgdorferi) protein is Ribosomal RNA small subunit methyltransferase H.